Reading from the N-terminus, the 370-residue chain is MFQWIYESFGNDYGFLRVFSYVTLRAMMAGLTSMFITFIFGKSLISFLLSLKFRESVRNDGPQSHANKSGTPTMGGLIMILSLTISTLLWGNLSNWNVILLLISAILFAGLGFTDDYMKSVKKIKGGMRARTKFIVTILFAVTITTLYFYYTGKSNVNLQKGIVFSITDLFLPFVKGPVWNLGIFAVPFAIIVLIGSSHAVNLTDGLDGLASGTVVISTATFALIAYVSGTPSAANYLHIPYLPGSHEYSVFLAGLSGALLGFLWFNCHPAQVFMGDTGSLFLGSTLGLVAIMLKKEILLVILGGIFVAEAVSVILQVGSFKLTGKRIFKMAPLHHHFELSGWSEEKVVIRFWIIGIILAIITLSTLKIQ.

10 consecutive transmembrane segments (helical) span residues 29-49 (AGLT…SFLL), 70-90 (GTPT…TLLW), 93-113 (LSNW…GLGF), 133-153 (KFIV…YYTG), 177-197 (GPVW…LIGS), 209-229 (GLAS…AYVS), 251-271 (VFLA…CHPA), 273-293 (VFMG…VAIM), 298-318 (ILLV…ILQV), and 349-369 (VIRF…TLKI).

It belongs to the glycosyltransferase 4 family. MraY subfamily. The cofactor is Mg(2+).

The protein resides in the cell inner membrane. The enzyme catalyses UDP-N-acetyl-alpha-D-muramoyl-L-alanyl-gamma-D-glutamyl-meso-2,6-diaminopimeloyl-D-alanyl-D-alanine + di-trans,octa-cis-undecaprenyl phosphate = di-trans,octa-cis-undecaprenyl diphospho-N-acetyl-alpha-D-muramoyl-L-alanyl-D-glutamyl-meso-2,6-diaminopimeloyl-D-alanyl-D-alanine + UMP. It functions in the pathway cell wall biogenesis; peptidoglycan biosynthesis. In terms of biological role, catalyzes the initial step of the lipid cycle reactions in the biosynthesis of the cell wall peptidoglycan: transfers peptidoglycan precursor phospho-MurNAc-pentapeptide from UDP-MurNAc-pentapeptide onto the lipid carrier undecaprenyl phosphate, yielding undecaprenyl-pyrophosphoryl-MurNAc-pentapeptide, known as lipid I. In Leptospira biflexa serovar Patoc (strain Patoc 1 / Ames), this protein is Phospho-N-acetylmuramoyl-pentapeptide-transferase.